The primary structure comprises 180 residues: CASP-like protein 2D1 (180 aa).

Over 1–7 (MAASGLK) the chain is Cytoplasmic. A helical transmembrane segment spans residues 8–28 (VPEMALRVCVVPLALASLWEM). The Extracellular portion of the chain corresponds to 29-48 (ATNAQADDTYGEVKFSDLSG). The chain crosses the membrane as a helical span at residues 49–69 (FSYLVGVNAVTAAYALVSILL). Topologically, residues 70–79 (SSLKPLARYD) are cytoplasmic. Residues 80 to 100 (WVILVMDQASAYLLVTSASAA) form a helical membrane-spanning segment. At 101-129 (AELLQLARRGDREVSWGEVCSYFGRFCGK) the chain is on the extracellular side. The chain crosses the membrane as a helical span at residues 130-150 (ATVSLALHAAALACFVALALV). The Cytoplasmic portion of the chain corresponds to 151 to 180 (SAFRVLSTTGSSCHPPKHAQAQEHEQGRYN). Positions 161-180 (SSCHPPKHAQAQEHEQGRYN) are disordered. Residues 170–180 (QAQEHEQGRYN) are compositionally biased toward basic and acidic residues.

It belongs to the Casparian strip membrane proteins (CASP) family. In terms of assembly, homodimer and heterodimers.

It localises to the cell membrane. This chain is CASP-like protein 2D1, found in Sorghum bicolor (Sorghum).